Consider the following 1103-residue polypeptide: Retinal guanylyl cyclase 1 (1103 aa).

A signal peptide spans 1-51 (MTACARRAGGLPDPGLCGPAWWAPSLPRLPRALPRLPLLLLLLLLQPPALS). At 52-462 (AVFTVGVLGP…PNNICGGGLE (411 aa)) the chain is on the extracellular side. Asn297 is a glycosylation site (N-linked (GlcNAc...) asparagine). Residues 463–487 (PGLVFLGFLLVVGMGLAGAFLAHYV) form a helical membrane-spanning segment. Over 488–1103 (RHRLLHMQMV…LEKARPGQFS (616 aa)) the chain is Cytoplasmic. The 284-residue stretch at 525-808 (QGSRSSLGAR…DHTFDLFKNI (284 aa)) folds into the Protein kinase domain. One can recognise a Guanylate cyclase domain in the interval 880–1010 (TLYFSDIVGF…DTVNTASRME (131 aa)). The interval 1065 to 1103 (PIPKPPDLQPGSSNHGISLQEIPPERRRKLEKARPGQFS) is disordered.

The protein belongs to the adenylyl cyclase class-4/guanylyl cyclase family. As to quaternary structure, homodimer; requires homodimerization for guanylyl cyclase activity. Interacts with RD3; promotes the exit of GUCY2D from the endoplasmic reticulum and its trafficking to the photoreceptor outer segments. Interaction with RD3 negatively regulates guanylate cyclase activity. As to expression, retina.

Its subcellular location is the photoreceptor outer segment membrane. The protein localises to the endoplasmic reticulum membrane. It carries out the reaction GTP = 3',5'-cyclic GMP + diphosphate. Its activity is regulated as follows. Activated by GUCA1A when free calcium ions concentration is low, and inhibited by GUCA1A when free calcium ions concentration is high. Negatively regulated by RD3; inhibits the basal and GUCA1A-stimulated guanylate cyclase activity. Its function is as follows. Catalyzes the synthesis of cyclic GMP (cGMP) in rods and cones of photoreceptors. Plays an essential role in phototransduction, by mediating cGMP replenishment. May also participate in the trafficking of membrane-asociated proteins to the photoreceptor outer segment membrane. The chain is Retinal guanylyl cyclase 1 (GUCY2D) from Homo sapiens (Human).